We begin with the raw amino-acid sequence, 283 residues long: Pantothenate synthetase (283 aa).

An ATP-binding site is contributed by 30–37 (MGNLHDGH). Histidine 37 functions as the Proton donor in the catalytic mechanism. Residue glutamine 61 coordinates (R)-pantoate. A beta-alanine-binding site is contributed by glutamine 61. 149 to 152 (GEKD) contributes to the ATP binding site. A (R)-pantoate-binding site is contributed by glutamine 155. An ATP-binding site is contributed by 186–189 (LSSR).

Belongs to the pantothenate synthetase family. As to quaternary structure, homodimer.

Its subcellular location is the cytoplasm. The catalysed reaction is (R)-pantoate + beta-alanine + ATP = (R)-pantothenate + AMP + diphosphate + H(+). Its pathway is cofactor biosynthesis; (R)-pantothenate biosynthesis; (R)-pantothenate from (R)-pantoate and beta-alanine: step 1/1. Catalyzes the condensation of pantoate with beta-alanine in an ATP-dependent reaction via a pantoyl-adenylate intermediate. The polypeptide is Pantothenate synthetase (Escherichia coli O157:H7).